The following is a 336-amino-acid chain: Cell division protein ZipA (336 aa).

Over 1–6 (MMQDLR) the chain is Periplasmic. A helical membrane pass occupies residues 7–27 (LILIVVGAIAIIALLLHGLWT). At 28–336 (SRKERSSLFR…RIRDVLKANA (309 aa)) the chain is on the cytoplasmic side. Residues 40–51 (PVKRAKKARDET) show a composition bias toward basic and acidic residues. Residues 40 to 190 (PVKRAKKARD…APAQPQQPAE (151 aa)) form a disordered region. The span at 76-89 (SFSSSSFDNASFDN) shows a compositional bias: low complexity. The span at 126 to 138 (PRSQVRGDSNPQV) shows a compositional bias: polar residues. Over residues 179 to 190 (QPAPAQPQQPAE) the composition is skewed to low complexity.

The protein belongs to the ZipA family. As to quaternary structure, interacts with FtsZ via their C-terminal domains.

It localises to the cell inner membrane. Essential cell division protein that stabilizes the FtsZ protofilaments by cross-linking them and that serves as a cytoplasmic membrane anchor for the Z ring. Also required for the recruitment to the septal ring of downstream cell division proteins. This is Cell division protein ZipA from Pectobacterium carotovorum subsp. carotovorum (strain PC1).